The chain runs to 781 residues: MAP7 domain-containing protein 2 (781 aa).

The span at 1 to 32 (MERSGGNGGGGGGGGGGGGGYGGSGGGGGGAG) shows a compositional bias: gly residues. 4 disordered regions span residues 1 to 37 (MERS…PSEG), 50 to 87 (AEAA…REER), 120 to 567 (LEEQ…AAKQ), and 597 to 628 (TRKS…ANKA). 2 stretches are compositionally biased toward basic and acidic residues: residues 71–87 (LKSD…REER) and 120–158 (LEEQ…RSLE). Residues 73 to 168 (SDERQRLAKE…RTQQLELKKK (96 aa)) are a coiled coil. The segment covering 192-210 (LTLATSTPPLDTGTTTAAA) has biased composition (low complexity). Polar residues-rich tracts occupy residues 211 to 245 (ESTN…TVAI) and 257 to 267 (LKSSYKSSPTR). Positions 318-328 (RRCEPPEDISK) are enriched in basic and acidic residues. Polar residues predominate over residues 329–348 (RLSSPVKSKITSKTYPQSPK). 4 stretches are compositionally biased toward basic and acidic residues: residues 370 to 387 (ETPK…EKEG), 397 to 436 (PREE…EHSA), 453 to 567 (LAEK…AAKQ), and 597 to 613 (TRKS…DPKV).

The protein belongs to the MAP7 family. In terms of assembly, interacts (via N-terminus) with microtubules; facilitates microtubule stabilization. Interacts with kinesin-1 family members, KIF5A, KIF5B and KIF5C. In terms of tissue distribution, expressed predominantly in the glomerular layer of the olfactory bulb and Sertoli cells of the testis.

It localises to the cytoplasm. The protein localises to the cytoskeleton. Its subcellular location is the microtubule organizing center. It is found in the centrosome. The protein resides in the midbody. It localises to the cell projection. The protein localises to the neuron projection. Its subcellular location is the axon. Microtubule-stabilizing protein involved in the control of cell motility and neurite outgrowth. Acts as a critical cofactor for kinesin transport; in the proximal axon regulates kinesin-1 family members, KIF5A, KIF5B and KIF5C recruitment to microtubules and contributes to kinesin-1-mediated transport in the axons. The polypeptide is MAP7 domain-containing protein 2 (Map7d2) (Mus musculus (Mouse)).